A 362-amino-acid polypeptide reads, in one-letter code: Endopolygalacturonase II (362 aa).

The N-terminal stretch at 1–21 (MHSFASLLAYGLAASATLASA) is a signal peptide. Residues 22–27 (SPIEAR) constitute a propeptide that is removed on maturation. C30 and C45 form a disulfide bridge. The stretch at 156–186 (ADDITLTDITINNADGDTLGGHNTDAFDVGN) is one PbH1 1 repeat. D201 serves as the catalytic Proton donor. A disulfide bridge connects residues C203 and C219. The active site involves H223. PbH1 repeat units follow at residues 238–259 (VKNV…RIKT), 267–289 (VSEI…VIQQ), and 301–322 (TNGV…DSKA). N-linked (GlcNAc...) (high mannose) asparagine glycosylation is present at N240. 2 cysteine pairs are disulfide-bonded: C329–C334 and C353–C362.

It belongs to the glycosyl hydrolase 28 family.

It localises to the secreted. The catalysed reaction is (1,4-alpha-D-galacturonosyl)n+m + H2O = (1,4-alpha-D-galacturonosyl)n + (1,4-alpha-D-galacturonosyl)m.. Functionally, involved in maceration and soft-rotting of plant tissue. Hydrolyzes the 1,4-alpha glycosidic bonds of de-esterified pectate in the smooth region of the plant cell wall. This is Endopolygalacturonase II from Aspergillus niger.